The sequence spans 1663 residues: MATDGASCEPDLSRAPEDAAGAAAEAAKKEFDVDTLSKSELRMLLSVMEGELEARDLVIEALRARRKEVFIQERYGRFNLNDPFLALQRDYEAGAGDKEKKPVCTNPLSILEAVMAHCKKMQERMSAQLAAAESRQKKLEMEKLQLQALEQEHKKLAARLEEERGKNKQVVLMLVKECKQLSGKVIEEAQKLEDVMAKLEEEKKKTNELEEELSTEKRRSTEMEAQMEKQLSEFDTEREQLRAKLNREEAHTTDLKEEIDKMKKMIEQLKRGSDSKPSLSLPRKTKDRRLVSISVGTEGTVTRSVACQTDLVTESADYMKKLPLTMPVKPSTGSPLVSANAKGSVCTSATMARPGIDRQASHGDLIGASVPAFPPPSANKIEENGPSTGSTPDPTSSTPPLPSNAAPPTAQTPGIAPQNSQAPPMHSLHSPCANTSLHPGLNPRIQAARFRFQGNANDPDQNGNTTQSPPSRDVSPTSRDNLVAKQLARNTVTQALSRFTSPQAGAPSRPGVPPTGDVGTHPPVGRTSLKTHAVARVDRGNPPPIPPKKPGLSQTPSPPHPQLKVIIDSSRASNTGAKVDNKTVASPPSSLPQGNRVINEENLPKSSSPQLPPKPSIDLTVAPAGCAVSALATSQVGAWPAATPGLSQPACSDSSLVIPTTIAFCSSINPVSASSCRPGASDSLLVTASGWSPSLTPLLMSGGPAPLAGRPTLLQQAAAQGNVTLLSMLLNEEGLDINYSCEDGHSALYSAAKNGHTDCVRLLLSAEAQVNAADKNGFTPLCAAAAQGHFECVELLIAYDANINHAADGGQTPLYLACKNGNKECVKLLLEAGTNRSVKTTDGWTPVHAAVDTGNVDSLKLLMYHRIPARGNSFNEEESESSVFDLDGGEDSPEGISKPVIPADLINHANREGWTAAHIAASKGFKNCLEILCRHRGLEPERRDKCNRTVHDVATDDCKHLLENLNALKIPLRISVGEIEPSNYGSDDLECENTICALNIRKQTSWDDFSKAVSQALTNHFQAISSDGWWSLEDVTCNNTTDSNIGLSARSIRSITLGNVLWSVGQSFVQSPWDFMRKNKAEHITVLLSGPLEGCLSSVTYASMIPLQMMQNYLRLVEQYHNVIFHGPEGSLQDYIVHQLALCLKHRQMAAGFSCEIVRAEVDARFSKEQLLDLFISSACLIPVKQSPSKKKIIIILENLEKSSLSELLRDFLAPLENRSTESPCTFQKGNGISECYYFHENCFLMGTIAKACLQGSDLLVQQHFRWVQLRWDGEPMQGLLQRFLRRKVVNKFKGQAPSPCDPVCKIVDWALSVWRQLNSCLARLGTPEALLGPKYFLSCPVVPGHAQVTVKWMSKLWNGVIAPRVQEAILSRASVKRQPGFGQTTAKRHPSQGQQAVIKAALSILLNKAVLHGCPLPRAELDQHTADFKGGSFPLSIVSSYNSCNKKKGESGAWRKVNTSPRRKSGRFSLPTWNKPDLSTEGMKNKTVSQLNCNRSASLSKQKSLENDLSLTLNLDQRLSLGSDDEADLVKELQSMCSSKSESDISKIADSRDDLRMFDSSGNNPVLSATINNLRMPVSQKEVSPLSSHQTTECSNSKSKTELGVSRVKSFLPVPRSKVTQCSQNTKRSSSSSNTRQIEINNNSKEENWNLHKNEHLEKPNK.

Disordered regions lie at residues 1-23 (MATD…AGAA), 203-222 (KKKT…RSTE), 359-440 (QASH…LHPG), 454-478 (GNAN…SPTS), and 498-617 (RFTS…KPSI). Positions 119–276 (KKMQERMSAQ…EQLKRGSDSK (158 aa)) form a coiled coil. The segment covering 386–396 (PSTGSTPDPTS) has biased composition (low complexity). Arginine 498 carries the post-translational modification Asymmetric dimethylarginine. Polar residues predominate over residues 583–593 (TVASPPSSLPQ). ANK repeat units follow at residues 709 to 739 (GRPT…DINY), 743 to 772 (DGHS…QVNA), 776 to 805 (NGFT…NINH), 809 to 838 (GGQT…NRSV), 842 to 871 (DGWT…PARG), and 912 to 942 (EGWT…EPER). Residues 1446–1485 (NKKKGESGAWRKVNTSPRRKSGRFSLPTWNKPDLSTEGMK) form a disordered region. At serine 1524 the chain carries Phosphoserine. The interval 1580–1663 (SQKEVSPLSS…KNEHLEKPNK (84 aa)) is disordered. Residues 1582 to 1599 (KEVSPLSSHQTTECSNSK) are compositionally biased toward polar residues. Residues 1624–1638 (SQNTKRSSSSSNTRQ) are compositionally biased toward low complexity. Residues 1645–1663 (SKEENWNLHKNEHLEKPNK) are compositionally biased toward basic and acidic residues.

In terms of assembly, interacts with CTTN/cortactin SH3 domain. Interacts with STRN, STRN4/zinedin and MOB4/phocein; this interactions mediate the association with the STRIPAK core complex and may regulate dendritic spine distribution of the STRIPAK complex in hippocampal neurons. Activation of glutamate receptors weakens the interaction with STRN and STRN4.

Its subcellular location is the cytoplasm. It localises to the cell cortex. The protein resides in the cell projection. The protein localises to the dendritic spine. Regulates the dendritic spine distribution of CTTN/cortactin in hippocampal neurons, and thus controls dendritic spinogenesis and dendritic spine maintenance. Associates with the striatin-interacting phosphatase and kinase (STRIPAK) core complex to regulate dendritic spine distribution of the STRIPAK complex in hippocampal neurons. The sequence is that of Cortactin-binding protein 2 (CTTNBP2) from Pongo abelii (Sumatran orangutan).